The primary structure comprises 156 residues: Small ribosomal subunit protein uS7 (156 aa).

The protein belongs to the universal ribosomal protein uS7 family. In terms of assembly, part of the 30S ribosomal subunit. Contacts proteins S9 and S11.

One of the primary rRNA binding proteins, it binds directly to 16S rRNA where it nucleates assembly of the head domain of the 30S subunit. Is located at the subunit interface close to the decoding center, probably blocks exit of the E-site tRNA. The sequence is that of Small ribosomal subunit protein uS7 from Clostridium botulinum (strain Okra / Type B1).